Here is a 75-residue protein sequence, read N- to C-terminus: Exodeoxyribonuclease 7 small subunit (75 aa).

Belongs to the XseB family. Heterooligomer composed of large and small subunits.

Its subcellular location is the cytoplasm. The enzyme catalyses Exonucleolytic cleavage in either 5'- to 3'- or 3'- to 5'-direction to yield nucleoside 5'-phosphates.. Functionally, bidirectionally degrades single-stranded DNA into large acid-insoluble oligonucleotides, which are then degraded further into small acid-soluble oligonucleotides. The protein is Exodeoxyribonuclease 7 small subunit of Clostridium perfringens (strain ATCC 13124 / DSM 756 / JCM 1290 / NCIMB 6125 / NCTC 8237 / Type A).